Here is a 346-residue protein sequence, read N- to C-terminus: Ribosomal RNA small subunit methyltransferase H (346 aa).

Residues 47–49 (GGY), Asp65, Phe92, Asp113, and Gln120 contribute to the S-adenosyl-L-methionine site. The segment covering 270–279 (RGEAPSRRLP) has biased composition (basic and acidic residues). Residues 270-346 (RGEAPSRRLP…ALPQRAAKGR (77 aa)) form a disordered region.

The protein belongs to the methyltransferase superfamily. RsmH family.

The protein resides in the cytoplasm. It carries out the reaction cytidine(1402) in 16S rRNA + S-adenosyl-L-methionine = N(4)-methylcytidine(1402) in 16S rRNA + S-adenosyl-L-homocysteine + H(+). In terms of biological role, specifically methylates the N4 position of cytidine in position 1402 (C1402) of 16S rRNA. This Methylocella silvestris (strain DSM 15510 / CIP 108128 / LMG 27833 / NCIMB 13906 / BL2) protein is Ribosomal RNA small subunit methyltransferase H.